The following is a 388-amino-acid chain: Chorismate synthase (388 aa).

2 residues coordinate NADP(+): R39 and R45. FMN contacts are provided by residues 130-132, 251-252, G296, 311-315, and R337; these read RSS, NA, and KPIPT.

The protein belongs to the chorismate synthase family. In terms of assembly, homotetramer. The cofactor is FMNH2.

It catalyses the reaction 5-O-(1-carboxyvinyl)-3-phosphoshikimate = chorismate + phosphate. The protein operates within metabolic intermediate biosynthesis; chorismate biosynthesis; chorismate from D-erythrose 4-phosphate and phosphoenolpyruvate: step 7/7. Functionally, catalyzes the anti-1,4-elimination of the C-3 phosphate and the C-6 proR hydrogen from 5-enolpyruvylshikimate-3-phosphate (EPSP) to yield chorismate, which is the branch point compound that serves as the starting substrate for the three terminal pathways of aromatic amino acid biosynthesis. This reaction introduces a second double bond into the aromatic ring system. The chain is Chorismate synthase from Geobacillus kaustophilus (strain HTA426).